Consider the following 263-residue polypeptide: uncharacterized protein (263 aa).

Gly31–Thr38 contacts ATP.

The protein belongs to the CbbQ/NirQ/NorQ/GpvN family.

This is an uncharacterized protein from Staphylococcus aureus (strain bovine RF122 / ET3-1).